The primary structure comprises 405 residues: Accessory Sec system protein translocase subunit SecY2 (405 aa).

A run of 10 helical transmembrane segments spans residues 14–34 (LFTS…LPFV), 65–85 (IFSV…MFSF), 104–124 (MYLT…RLPV), 131–151 (ILVV…LVWL), 156–176 (ASMG…LNIP), 191–211 (GIIV…ALMY), 247–267 (MYVM…GFIF), 285–305 (PLWV…FAFV), 343–363 (FSVI…LFVL), and 368–388 (LLRL…IFTI).

This sequence belongs to the SecY/SEC61-alpha family. SecY2 subfamily. In terms of assembly, component of the accessory SecA2/SecY2 protein translocase complex required to export cell wall proteins. May form heterotrimers with SecE and SecG subunits.

It is found in the cell membrane. Its function is as follows. Part of the accessory SecA2/SecY2 system specifically required for export of possible cell wall proteins. The central subunit of a protein translocation channel. The sequence is that of Accessory Sec system protein translocase subunit SecY2 from Streptococcus pneumoniae serotype 4 (strain ATCC BAA-334 / TIGR4).